A 219-amino-acid chain; its full sequence is UPF0502 protein Ppro_2903 (219 aa).

It belongs to the UPF0502 family.

This is UPF0502 protein Ppro_2903 from Pelobacter propionicus (strain DSM 2379 / NBRC 103807 / OttBd1).